A 104-amino-acid chain; its full sequence is Cuticle protein 67, isoform B (104 aa).

Tandem repeats lie at residues 7–10, 14–17, 21–24, 28–31, 85–88, 92–95, and 98–101.

In terms of biological role, component of the cuticle of migratory locust which contains more than 100 different structural proteins. The sequence is that of Cuticle protein 67, isoform B from Locusta migratoria (Migratory locust).